A 351-amino-acid polypeptide reads, in one-letter code: Phenylalanine--tRNA ligase alpha subunit (351 aa).

A Mg(2+)-binding site is contributed by Glu-266.

Belongs to the class-II aminoacyl-tRNA synthetase family. Phe-tRNA synthetase alpha subunit type 1 subfamily. In terms of assembly, tetramer of two alpha and two beta subunits. It depends on Mg(2+) as a cofactor.

The protein resides in the cytoplasm. The catalysed reaction is tRNA(Phe) + L-phenylalanine + ATP = L-phenylalanyl-tRNA(Phe) + AMP + diphosphate + H(+). This Anaplasma marginale (strain St. Maries) protein is Phenylalanine--tRNA ligase alpha subunit.